Reading from the N-terminus, the 328-residue chain is Ferredoxin--NADP reductase (328 aa).

Positions 34, 42, 47, 87, 120, 283, and 323 each coordinate FAD.

Belongs to the ferredoxin--NADP reductase type 2 family. In terms of assembly, homodimer. FAD is required as a cofactor.

It carries out the reaction 2 reduced [2Fe-2S]-[ferredoxin] + NADP(+) + H(+) = 2 oxidized [2Fe-2S]-[ferredoxin] + NADPH. The polypeptide is Ferredoxin--NADP reductase (Pediococcus pentosaceus (strain ATCC 25745 / CCUG 21536 / LMG 10740 / 183-1w)).